The sequence spans 241 residues: Carboxy-S-adenosyl-L-methionine synthase (241 aa).

S-adenosyl-L-methionine-binding positions include Y38, 63–65 (GCS), 88–89 (DN), 116–117 (DI), N131, and R198.

The protein belongs to the class I-like SAM-binding methyltransferase superfamily. Cx-SAM synthase family. As to quaternary structure, homodimer.

It catalyses the reaction prephenate + S-adenosyl-L-methionine = carboxy-S-adenosyl-L-methionine + 3-phenylpyruvate + H2O. Functionally, catalyzes the conversion of S-adenosyl-L-methionine (SAM) to carboxy-S-adenosyl-L-methionine (Cx-SAM). The protein is Carboxy-S-adenosyl-L-methionine synthase of Actinobacillus pleuropneumoniae serotype 7 (strain AP76).